Here is a 156-residue protein sequence, read N- to C-terminus: Small ribosomal subunit protein uS11 (156 aa).

A disordered region spans residues 1 to 27 (MSEKEQKEVEAKESSGKAEERRETREK).

It belongs to the universal ribosomal protein uS11 family. In terms of assembly, part of the 30S ribosomal subunit.

Its function is as follows. Located on the platform of the 30S subunit. This Thermofilum pendens (strain DSM 2475 / Hrk 5) protein is Small ribosomal subunit protein uS11.